Here is a 259-residue protein sequence, read N- to C-terminus: TCF3 fusion partner homolog (259 aa).

Disordered regions lie at residues 50–72 and 141–210; these read GGLGDSGLRERDEEEEAARGRRR and EDDG…APVQ. The residue at position 167 (S167) is a Phosphoserine. Over residues 167-178 the composition is skewed to polar residues; that stretch reads SPSQRTTATLDP. Position 172 is a phosphothreonine (T172). S180 and S188 each carry phosphoserine. T203 carries the post-translational modification Phosphothreonine. K222 is covalently cross-linked (Glycyl lysine isopeptide (Lys-Gly) (interchain with G-Cter in SUMO2)). S255 is subject to Phosphoserine.

Interacts with NOL3; translocates NOL3 into the nucleus and negatively regulated TFPT-induced cell death. Component of the chromatin remodeling INO80 complex; specifically part of a complex module associated with the N-terminus of INO80.

The protein resides in the nucleus. Functionally, appears to promote apoptosis in a p53/TP53-independent manner. In terms of biological role, putative regulatory component of the chromatin remodeling INO80 complex which is involved in transcriptional regulation, DNA replication and probably DNA repair. The protein is TCF3 fusion partner homolog (Tfpt) of Mus musculus (Mouse).